The chain runs to 445 residues: Phosphoglucosamine mutase (445 aa).

Ser-102 acts as the Phosphoserine intermediate in catalysis. Mg(2+) contacts are provided by Ser-102, Asp-240, Asp-242, and Asp-244. Ser-102 is subject to Phosphoserine.

Belongs to the phosphohexose mutase family. It depends on Mg(2+) as a cofactor. Post-translationally, activated by phosphorylation.

The enzyme catalyses alpha-D-glucosamine 1-phosphate = D-glucosamine 6-phosphate. In terms of biological role, catalyzes the conversion of glucosamine-6-phosphate to glucosamine-1-phosphate. The sequence is that of Phosphoglucosamine mutase from Mycolicibacterium gilvum (strain PYR-GCK) (Mycobacterium gilvum (strain PYR-GCK)).